The following is a 392-amino-acid chain: tRNA(Met) cytidine acetate ligase (392 aa).

Residues 7 to 20 (VVEYNPFHNGHQLH), Gly-101, Asn-162, and 187 to 188 (RI) each bind ATP.

The protein belongs to the TmcAL family.

The protein localises to the cytoplasm. The enzyme catalyses cytidine(34) in elongator tRNA(Met) + acetate + ATP = N(4)-acetylcytidine(34) in elongator tRNA(Met) + AMP + diphosphate. Its function is as follows. Catalyzes the formation of N(4)-acetylcytidine (ac(4)C) at the wobble position of elongator tRNA(Met), using acetate and ATP as substrates. First activates an acetate ion to form acetyladenylate (Ac-AMP) and then transfers the acetyl group to tRNA to form ac(4)C34. The sequence is that of tRNA(Met) cytidine acetate ligase from Listeria welshimeri serovar 6b (strain ATCC 35897 / DSM 20650 / CCUG 15529 / CIP 8149 / NCTC 11857 / SLCC 5334 / V8).